Reading from the N-terminus, the 139-residue chain is Translation initiation factor 2 subunit beta (139 aa).

Belongs to the eIF-2-beta/eIF-5 family. In terms of assembly, heterotrimer composed of an alpha, a beta and a gamma chain.

Its function is as follows. eIF-2 functions in the early steps of protein synthesis by forming a ternary complex with GTP and initiator tRNA. This chain is Translation initiation factor 2 subunit beta, found in Methanococcus aeolicus (strain ATCC BAA-1280 / DSM 17508 / OCM 812 / Nankai-3).